The primary structure comprises 236 residues: Ribose-5-phosphate isomerase A (236 aa).

Substrate contacts are provided by residues 28-31 (TGST), 83-86 (DGAD), and 96-99 (KGGG). Glu105 serves as the catalytic Proton acceptor. Substrate is bound at residue Lys123.

Belongs to the ribose 5-phosphate isomerase family. As to quaternary structure, homodimer.

It carries out the reaction aldehydo-D-ribose 5-phosphate = D-ribulose 5-phosphate. It participates in carbohydrate degradation; pentose phosphate pathway; D-ribose 5-phosphate from D-ribulose 5-phosphate (non-oxidative stage): step 1/1. In terms of biological role, catalyzes the reversible conversion of ribose-5-phosphate to ribulose 5-phosphate. The protein is Ribose-5-phosphate isomerase A of Methylorubrum populi (strain ATCC BAA-705 / NCIMB 13946 / BJ001) (Methylobacterium populi).